Consider the following 280-residue polypeptide: Ribonuclease Z (280 aa).

The Zn(2+) site is built by histidine 61, histidine 63, aspartate 65, histidine 66, histidine 153, aspartate 176, and histidine 240. Aspartate 65 serves as the catalytic Proton acceptor.

The protein belongs to the RNase Z family. As to quaternary structure, homodimer. It depends on Zn(2+) as a cofactor.

The enzyme catalyses Endonucleolytic cleavage of RNA, removing extra 3' nucleotides from tRNA precursor, generating 3' termini of tRNAs. A 3'-hydroxy group is left at the tRNA terminus and a 5'-phosphoryl group is left at the trailer molecule.. Its function is as follows. Zinc phosphodiesterase, which displays some tRNA 3'-processing endonuclease activity. Probably involved in tRNA maturation, by removing a 3'-trailer from precursor tRNA. In Mycolicibacterium paratuberculosis (strain ATCC BAA-968 / K-10) (Mycobacterium paratuberculosis), this protein is Ribonuclease Z.